We begin with the raw amino-acid sequence, 523 residues long: MFS-type transporter R5 (523 aa).

The disordered stretch occupies residues 19 to 42 (QLNEATAQRESATNNPNDSSSIDE). The segment covering 21–38 (NEATAQRESATNNPNDSS) has biased composition (polar residues). 3 N-linked (GlcNAc...) asparagine glycosylation sites follow: Asn-35, Asn-94, and Asn-143. 2 helical membrane-spanning segments follow: residues 183–203 (AYLT…GGLL) and 211–231 (AIFW…FTFF). N-linked (GlcNAc...) asparagine glycans are attached at residues Asn-235 and Asn-250. The next 6 membrane-spanning stretches (helical) occupy residues 291-311 (FIVC…ISIF), 319-339 (YGYS…GSIL), 381-401 (LTIS…YGWL), 408-428 (VASV…VLIA), 443-463 (ALGA…VAAV), and 470-490 (IGIG…LPAL).

This sequence belongs to the major facilitator superfamily.

The protein localises to the membrane. Its function is as follows. MFS-type transporter; part of the gene cluster that mediates the biosynthesis of squalestatin S1 (SQS1, also known as zaragozic acid A), a heavily oxidized fungal polyketide that offers potent cholesterol lowering activity by targeting squalene synthase (SS). The chain is MFS-type transporter R5 from Phoma sp. (strain ATCC 20986 / MF5453).